The primary structure comprises 143 residues: Hemoglobin subunit alpha-2 (143 aa).

The residue at position 2 (Ser-2) is an N-acetylserine. The 142-residue stretch at 2-143 (SLSTKDKDTV…LARALSEKYR (142 aa)) folds into the Globin domain. Heme b is bound by residues His-60 and His-89.

This sequence belongs to the globin family. Hb 2 is a heterotetramer of two alpha-2 and two beta chains. As to expression, red blood cells.

Functionally, involved in oxygen transport from gills to the various peripheral tissues. The polypeptide is Hemoglobin subunit alpha-2 (Cottoperca gobio (Frogmouth)).